A 437-amino-acid polypeptide reads, in one-letter code: Probable exopolygalacturonase C (437 aa).

Residues 1 to 21 form the signal peptide; sequence MLITKTAFLAFLLSSVPLAHG. Residues Asn25, Asn42, Asn82, Asn99, and Asn149 are each glycosylated (N-linked (GlcNAc...) asparagine). PbH1 repeat units follow at residues 215 to 236 and 238 to 259; these read GTNIRISDSIMYNGDDAIAVGS and SHNIVFERNTIGYQSHGMSIGS. Asp229 functions as the Proton donor in the catalytic mechanism. Residue His253 is part of the active site. Residue Asn269 is glycosylated (N-linked (GlcNAc...) asparagine). 2 PbH1 repeats span residues 270-291 and 299-320; these read ITNLRFEDVTVIDALYAARFKS and VKNVTWKNIRVYNVTFPIFVTQ. N-linked (GlcNAc...) asparagine glycosylation is found at Asn301 and Asn311. Residues Cys386 and Cys392 are joined by a disulfide bond. 2 N-linked (GlcNAc...) asparagine glycosylation sites follow: Asn428 and Asn431.

This sequence belongs to the glycosyl hydrolase 28 family.

It localises to the secreted. It catalyses the reaction [(1-&gt;4)-alpha-D-galacturonosyl](n) + H2O = alpha-D-galacturonate + [(1-&gt;4)-alpha-D-galacturonosyl](n-1). Specific in hydrolyzing the terminal glycosidic bond of polygalacturonic acid and oligogalacturonates. The sequence is that of Probable exopolygalacturonase C (pgxC) from Aspergillus flavus (strain ATCC 200026 / FGSC A1120 / IAM 13836 / NRRL 3357 / JCM 12722 / SRRC 167).